A 353-amino-acid chain; its full sequence is GTPase Obg (353 aa).

Residues 1 to 159 (MKFLDEAKVY…RWIWLRLKLI (159 aa)) enclose the Obg domain. Residues 160 to 327 (ADAGLVGLPN…VLRALVAVIG (168 aa)) enclose the OBG-type G domain. GTP-binding positions include 166 to 173 (GLPNAGKS), 191 to 195 (FTTLH), 212 to 215 (DIPG), 279 to 282 (NKID), and 308 to 310 (SGV). Ser173 and Thr193 together coordinate Mg(2+).

Belongs to the TRAFAC class OBG-HflX-like GTPase superfamily. OBG GTPase family. In terms of assembly, monomer. The cofactor is Mg(2+).

Its subcellular location is the cytoplasm. Its function is as follows. An essential GTPase which binds GTP, GDP and possibly (p)ppGpp with moderate affinity, with high nucleotide exchange rates and a fairly low GTP hydrolysis rate. Plays a role in control of the cell cycle, stress response, ribosome biogenesis and in those bacteria that undergo differentiation, in morphogenesis control. This is GTPase Obg from Rhodopseudomonas palustris (strain TIE-1).